We begin with the raw amino-acid sequence, 346 residues long: Protein NDL1 (346 aa).

The protein belongs to the NDRG family. Interacts with GB1. Interacts with the heterodimers formed by GB1 and GG1, or GB1 and GG2. Interacts with RGS1. Expressed in root vasculature, cotyledons, leaves, petals, mature stamens and pollen grains.

The protein resides in the cytoplasm. Interacts with the heterotrimeric G protein beta subunit GB1 and plays an significant role in GB1-dependent regulation of lateral root formation. Involved in a signaling pathway that modulates root auxin transport and auxin gradients. Acts partially by positively regulating the auxin carrier PIN2 and AUX1. Acts, together with GB1 as positive regulator of meristem initiation and branching. GB1 and NDL1 positively regulate basipetal inflorescence auxin transport and modulate MAX2 expression in shoots, which regulates organ and lateral meristem formation by the establishment and maintenance of auxin gradients. This is Protein NDL1 from Arabidopsis thaliana (Mouse-ear cress).